Consider the following 160-residue polypeptide: tRNA (cytidine(34)-2'-O)-methyltransferase (160 aa).

4 residues coordinate S-adenosyl-L-methionine: Leu78, Gly100, Ile122, and Ser130.

This sequence belongs to the class IV-like SAM-binding methyltransferase superfamily. RNA methyltransferase TrmH family. TrmL subfamily. Homodimer.

It localises to the cytoplasm. The enzyme catalyses cytidine(34) in tRNA + S-adenosyl-L-methionine = 2'-O-methylcytidine(34) in tRNA + S-adenosyl-L-homocysteine + H(+). The catalysed reaction is 5-carboxymethylaminomethyluridine(34) in tRNA(Leu) + S-adenosyl-L-methionine = 5-carboxymethylaminomethyl-2'-O-methyluridine(34) in tRNA(Leu) + S-adenosyl-L-homocysteine + H(+). In terms of biological role, methylates the ribose at the nucleotide 34 wobble position in the two leucyl isoacceptors tRNA(Leu)(CmAA) and tRNA(Leu)(cmnm5UmAA). Catalyzes the methyl transfer from S-adenosyl-L-methionine to the 2'-OH of the wobble nucleotide. The sequence is that of tRNA (cytidine(34)-2'-O)-methyltransferase from Haemophilus influenzae (strain ATCC 51907 / DSM 11121 / KW20 / Rd).